Here is a 192-residue protein sequence, read N- to C-terminus: MAAMAALQSSFTSLSLSSNSFLGQRLFPSPTTLQVKTEGHSPCLIVMRIKRWERKDCKPNSLPKLHKMHVKVGDTVKVISGGEKGKIGEISKIHKHNSTVIIKDLNLKTKHVKSKEEGEQGQIIKIEAAIHSSNVMLYSKEQEVASRVGHKILEDGRKVRYLIKTGEIVDTPDRWKEIQNKKESETAVAVAA.

Residues 1-47 constitute a chloroplast transit peptide; the sequence is MAAMAALQSSFTSLSLSSNSFLGQRLFPSPTTLQVKTEGHSPCLIVM.

In terms of assembly, component of the chloroplast large ribosomal subunit (LSU). Mature 70S chloroplast ribosomes of higher plants consist of a small (30S) and a large (50S) subunit. The 30S small subunit contains 1 molecule of ribosomal RNA (16S rRNA) and 24 different proteins. The 50S large subunit contains 3 rRNA molecules (23S, 5S and 4.5S rRNA) and 33 different proteins.

It is found in the plastid. Its subcellular location is the chloroplast. In terms of biological role, component of the chloroplast ribosome (chloro-ribosome), a dedicated translation machinery responsible for the synthesis of chloroplast genome-encoded proteins, including proteins of the transcription and translation machinery and components of the photosynthetic apparatus. The protein is Large ribosomal subunit protein uL24c (RPL24) of Spinacia oleracea (Spinach).